A 459-amino-acid polypeptide reads, in one-letter code: Bifunctional protein GlmU (459 aa).

The interval 1-229 (MSNFAIILAA…FDESLGVNDR (229 aa)) is pyrophosphorylase. Residues 8 to 11 (LAAG), Lys22, Gln72, and 77 to 78 (GT) contribute to the UDP-N-acetyl-alpha-D-glucosamine site. A Mg(2+)-binding site is contributed by Asp102. Residues Gly139, Glu154, Asn169, and Asn227 each contribute to the UDP-N-acetyl-alpha-D-glucosamine site. Asn227 is a Mg(2+) binding site. Residues 230–250 (VALATAESVMRRRINHKHMVN) are linker. Positions 251-459 (GVSFVNPEAT…TRLPHHPKNQ (209 aa)) are N-acetyltransferase. 2 residues coordinate UDP-N-acetyl-alpha-D-glucosamine: Arg332 and Lys350. The Proton acceptor role is filled by His362. UDP-N-acetyl-alpha-D-glucosamine contacts are provided by Tyr365 and Asn376. Acetyl-CoA contacts are provided by residues Ala379, 385–386 (NY), Ser404, Ala422, and Arg439.

The protein in the N-terminal section; belongs to the N-acetylglucosamine-1-phosphate uridyltransferase family. This sequence in the C-terminal section; belongs to the transferase hexapeptide repeat family. In terms of assembly, homotrimer. Mg(2+) is required as a cofactor.

Its subcellular location is the cytoplasm. The catalysed reaction is alpha-D-glucosamine 1-phosphate + acetyl-CoA = N-acetyl-alpha-D-glucosamine 1-phosphate + CoA + H(+). It carries out the reaction N-acetyl-alpha-D-glucosamine 1-phosphate + UTP + H(+) = UDP-N-acetyl-alpha-D-glucosamine + diphosphate. It functions in the pathway nucleotide-sugar biosynthesis; UDP-N-acetyl-alpha-D-glucosamine biosynthesis; N-acetyl-alpha-D-glucosamine 1-phosphate from alpha-D-glucosamine 6-phosphate (route II): step 2/2. Its pathway is nucleotide-sugar biosynthesis; UDP-N-acetyl-alpha-D-glucosamine biosynthesis; UDP-N-acetyl-alpha-D-glucosamine from N-acetyl-alpha-D-glucosamine 1-phosphate: step 1/1. The protein operates within bacterial outer membrane biogenesis; LPS lipid A biosynthesis. Its function is as follows. Catalyzes the last two sequential reactions in the de novo biosynthetic pathway for UDP-N-acetylglucosamine (UDP-GlcNAc). The C-terminal domain catalyzes the transfer of acetyl group from acetyl coenzyme A to glucosamine-1-phosphate (GlcN-1-P) to produce N-acetylglucosamine-1-phosphate (GlcNAc-1-P), which is converted into UDP-GlcNAc by the transfer of uridine 5-monophosphate (from uridine 5-triphosphate), a reaction catalyzed by the N-terminal domain. In Streptococcus pneumoniae (strain JJA), this protein is Bifunctional protein GlmU.